The following is a 249-amino-acid chain: 1-(5-phosphoribosyl)-5-[(5-phosphoribosylamino)methylideneamino] imidazole-4-carboxamide isomerase (249 aa).

Residue Asp8 is the Proton acceptor of the active site. Catalysis depends on Asp131, which acts as the Proton donor.

This sequence belongs to the HisA/HisF family.

The protein resides in the cytoplasm. The catalysed reaction is 1-(5-phospho-beta-D-ribosyl)-5-[(5-phospho-beta-D-ribosylamino)methylideneamino]imidazole-4-carboxamide = 5-[(5-phospho-1-deoxy-D-ribulos-1-ylimino)methylamino]-1-(5-phospho-beta-D-ribosyl)imidazole-4-carboxamide. It functions in the pathway amino-acid biosynthesis; L-histidine biosynthesis; L-histidine from 5-phospho-alpha-D-ribose 1-diphosphate: step 4/9. The chain is 1-(5-phosphoribosyl)-5-[(5-phosphoribosylamino)methylideneamino] imidazole-4-carboxamide isomerase from Leptothrix cholodnii (strain ATCC 51168 / LMG 8142 / SP-6) (Leptothrix discophora (strain SP-6)).